Reading from the N-terminus, the 317-residue chain is Enoyl-CoA delta isomerase 3, peroxisomal (317 aa).

An ACB domain is found at 1–46; it reads MPKPGVFNFVNKATWDARNALGSLPKETARKNYVDLVSSLSSSSEA. The interval 40–60 is disordered; that stretch reads LSSSSEAPSQGKRGADEKARE. Residue 120–124 coordinates substrate; sequence SGNDL. Residues 315–317 carry the Microbody targeting signal motif; sequence AKL.

The protein belongs to the enoyl-CoA hydratase/isomerase family. In terms of tissue distribution, expressed at high levels in the kidney. Also detected at very low levels in the duodenum, jejunum, ileum, heart, liver, lung, and brown adipose tissue (at protein level). In the kidney, expression seems to be localized mainly to the proximal tubule.

The protein resides in the peroxisome. The catalysed reaction is a (3Z)-enoyl-CoA = a 4-saturated (2E)-enoyl-CoA. It catalyses the reaction a (3E)-enoyl-CoA = a 4-saturated (2E)-enoyl-CoA. The enzyme catalyses (3E)-nonenoyl-CoA = (2E)-nonenoyl-CoA. Catalyzes the isomerization of trans-3-nonenoyl-CoA into trans-2-nonenoyl-CoA. May also have activity towards other enoyl-CoA species. The polypeptide is Enoyl-CoA delta isomerase 3, peroxisomal (Mus musculus (Mouse)).